Here is a 488-residue protein sequence, read N- to C-terminus: Erythromycin resistance ATP-binding protein MsrA (488 aa).

The region spanning 6–199 is the ABC transporter 1 domain; that stretch reads IKFNQINHKL…NQYEQEQLEQ (194 aa). ATP is bound at residue 38 to 45; the sequence is GGNGTGKT. The segment at 200–298 is Q-linker, rich in Glu and hydrophilic AA; it reads QRKYEQYISE…KIYDIHNNYP (99 aa). Residues 211–255 are disordered; it reads QRLSQASKAKRNQAQQMAQASSKQKNKSIAPDRLSASKEKGTVEK. Positions 222 to 233 are enriched in low complexity; sequence NQAQQMAQASSK. Positions 245–255 are enriched in basic and acidic residues; that stretch reads SASKEKGTVEK. The 189-residue stretch at 299–487 folds into the ABC transporter 2 domain; that stretch reads IIAQNLTLVK…ELTGQSIHDI (189 aa). 331–338 serves as a coordination point for ATP; the sequence is GANGVGKT.

This sequence belongs to the ABC transporter superfamily.

Its function is as follows. Confers resistance to 14-membered ring macrolides (like erythromycin) and to B streptogramins, by acting as an ATP-dependent efflux pump. This is Erythromycin resistance ATP-binding protein MsrA (msrA) from Staphylococcus epidermidis.